A 330-amino-acid chain; its full sequence is Ketol-acid reductoisomerase (NADP(+)) (330 aa).

A KARI N-terminal Rossmann domain is found at 2–182 (VETFYEKDAD…GCTRAGVIKT (181 aa)). NADP(+) contacts are provided by residues 25 to 28 (YGSQ), K48, S51, S53, and 83 to 86 (DEVQ). H108 is an active-site residue. G134 lines the NADP(+) pocket. Residues 183–328 (TFKEETETDL…EKLRAMMPWI (146 aa)) enclose the KARI C-terminal knotted domain. Positions 191, 195, 227, and 231 each coordinate Mg(2+). S252 lines the substrate pocket.

It belongs to the ketol-acid reductoisomerase family. Mg(2+) is required as a cofactor.

It catalyses the reaction (2R)-2,3-dihydroxy-3-methylbutanoate + NADP(+) = (2S)-2-acetolactate + NADPH + H(+). It carries out the reaction (2R,3R)-2,3-dihydroxy-3-methylpentanoate + NADP(+) = (S)-2-ethyl-2-hydroxy-3-oxobutanoate + NADPH + H(+). Its pathway is amino-acid biosynthesis; L-isoleucine biosynthesis; L-isoleucine from 2-oxobutanoate: step 2/4. It functions in the pathway amino-acid biosynthesis; L-valine biosynthesis; L-valine from pyruvate: step 2/4. Involved in the biosynthesis of branched-chain amino acids (BCAA). Catalyzes an alkyl-migration followed by a ketol-acid reduction of (S)-2-acetolactate (S2AL) to yield (R)-2,3-dihydroxy-isovalerate. In the isomerase reaction, S2AL is rearranged via a Mg-dependent methyl migration to produce 3-hydroxy-3-methyl-2-ketobutyrate (HMKB). In the reductase reaction, this 2-ketoacid undergoes a metal-dependent reduction by NADPH to yield (R)-2,3-dihydroxy-isovalerate. This chain is Ketol-acid reductoisomerase (NADP(+)), found in Petrotoga mobilis (strain DSM 10674 / SJ95).